Consider the following 708-residue polypeptide: Fatty acid oxidation complex subunit alpha (708 aa).

Residues 1 to 191 form an enoyl-CoA hydratase region; sequence MDNNNAFQLS…KLGVVDACVP (191 aa). The 3-hydroxyacyl-CoA dehydrogenase stretch occupies residues 311–708; sequence APVAAVGVLG…RAGLGEKFYP (398 aa).

In the N-terminal section; belongs to the enoyl-CoA hydratase/isomerase family. It in the central section; belongs to the 3-hydroxyacyl-CoA dehydrogenase family. As to quaternary structure, heterotetramer of two alpha chains (FadJ) and two beta chains (FadI).

It localises to the cytoplasm. It catalyses the reaction a (3S)-3-hydroxyacyl-CoA = a (2E)-enoyl-CoA + H2O. The catalysed reaction is a 4-saturated-(3S)-3-hydroxyacyl-CoA = a (3E)-enoyl-CoA + H2O. The enzyme catalyses a (3S)-3-hydroxyacyl-CoA + NAD(+) = a 3-oxoacyl-CoA + NADH + H(+). It carries out the reaction (3S)-3-hydroxybutanoyl-CoA = (3R)-3-hydroxybutanoyl-CoA. It functions in the pathway lipid metabolism; fatty acid beta-oxidation. Functionally, catalyzes the formation of a hydroxyacyl-CoA by addition of water on enoyl-CoA. Also exhibits 3-hydroxyacyl-CoA epimerase and 3-hydroxyacyl-CoA dehydrogenase activities. This Vibrio cholerae serotype O1 (strain ATCC 39315 / El Tor Inaba N16961) protein is Fatty acid oxidation complex subunit alpha.